The chain runs to 411 residues: 2,3-bisphosphoglycerate-independent phosphoglycerate mutase (411 aa).

Belongs to the BPG-independent phosphoglycerate mutase family. A-PGAM subfamily.

The catalysed reaction is (2R)-2-phosphoglycerate = (2R)-3-phosphoglycerate. It participates in carbohydrate degradation; glycolysis; pyruvate from D-glyceraldehyde 3-phosphate: step 3/5. Catalyzes the interconversion of 2-phosphoglycerate and 3-phosphoglycerate. In Pyrobaculum islandicum (strain DSM 4184 / JCM 9189 / GEO3), this protein is 2,3-bisphosphoglycerate-independent phosphoglycerate mutase.